Here is a 594-residue protein sequence, read N- to C-terminus: UvrABC system protein C (594 aa).

Residues 14–91 (DSPGCYLHKD…IQENMPKYNI (78 aa)) form the GIY-YIG domain. The UVR domain occupies 196–231 (DKIIDDLRSKMLEASHNQEFERAAEYRDLISGIATM).

It belongs to the UvrC family. Interacts with UvrB in an incision complex.

The protein resides in the cytoplasm. Its function is as follows. The UvrABC repair system catalyzes the recognition and processing of DNA lesions. UvrC both incises the 5' and 3' sides of the lesion. The N-terminal half is responsible for the 3' incision and the C-terminal half is responsible for the 5' incision. This Streptococcus equi subsp. zooepidemicus (strain H70) protein is UvrABC system protein C.